The chain runs to 376 residues: PqqA peptide cyclase (376 aa).

A Radical SAM core domain is found at 4–219 (VPPPLSVLLE…VETARRSLGD (216 aa)). [4Fe-4S] cluster is bound by residues Cys18, Cys22, and Cys25.

This sequence belongs to the radical SAM superfamily. PqqE family. As to quaternary structure, interacts with PqqD. The interaction is necessary for activity of PqqE. The cofactor is [4Fe-4S] cluster.

It catalyses the reaction [PQQ precursor protein] + S-adenosyl-L-methionine = E-Y cross-linked-[PQQ precursor protein] + 5'-deoxyadenosine + L-methionine + H(+). Its pathway is cofactor biosynthesis; pyrroloquinoline quinone biosynthesis. Functionally, catalyzes the cross-linking of a glutamate residue and a tyrosine residue in the PqqA protein as part of the biosynthesis of pyrroloquinoline quinone (PQQ). The sequence is that of PqqA peptide cyclase from Xanthomonas campestris pv. campestris (strain B100).